The following is a 306-amino-acid chain: Dermonecrotic toxin LiSicTox-alphaIA2bi (306 aa).

Residues 1–18 (MLPYIALILVCWSVLSQA) form the signal peptide. A propeptide spanning residues 19 to 26 (AQTDVEGR) is cleaved from the precursor. Histidine 38 is a catalytic residue. Mg(2+) contacts are provided by glutamate 58 and aspartate 60. The active-site Nucleophile is the histidine 74. 2 disulfides stabilise this stretch: cysteine 78-cysteine 84 and cysteine 80-cysteine 223. Mg(2+) is bound at residue aspartate 118. N-linked (GlcNAc...) asparagine glycosylation is present at asparagine 283.

The protein belongs to the arthropod phospholipase D family. Class II subfamily. It depends on Mg(2+) as a cofactor. In terms of tissue distribution, expressed by the venom gland.

The protein localises to the secreted. It carries out the reaction an N-(acyl)-sphingosylphosphocholine = an N-(acyl)-sphingosyl-1,3-cyclic phosphate + choline. The enzyme catalyses an N-(acyl)-sphingosylphosphoethanolamine = an N-(acyl)-sphingosyl-1,3-cyclic phosphate + ethanolamine. The catalysed reaction is a 1-acyl-sn-glycero-3-phosphocholine = a 1-acyl-sn-glycero-2,3-cyclic phosphate + choline. It catalyses the reaction a 1-acyl-sn-glycero-3-phosphoethanolamine = a 1-acyl-sn-glycero-2,3-cyclic phosphate + ethanolamine. In terms of biological role, dermonecrotic toxins cleave the phosphodiester linkage between the phosphate and headgroup of certain phospholipids (sphingolipid and lysolipid substrates), forming an alcohol (often choline) and a cyclic phosphate. This toxin acts on sphingomyelin (SM). It may also act on ceramide phosphoethanolamine (CPE), lysophosphatidylcholine (LPC) and lysophosphatidylethanolamine (LPE), but not on lysophosphatidylserine (LPS), and lysophosphatidylglycerol (LPG). It acts by transphosphatidylation, releasing exclusively cyclic phosphate products as second products. Induces dermonecrosis, hemolysis, increased vascular permeability, edema, inflammatory response, and platelet aggregation. The protein is Dermonecrotic toxin LiSicTox-alphaIA2bi of Loxosceles intermedia (Brown spider).